A 261-amino-acid polypeptide reads, in one-letter code: Indole-3-glycerol phosphate synthase (261 aa).

Belongs to the TrpC family.

It catalyses the reaction 1-(2-carboxyphenylamino)-1-deoxy-D-ribulose 5-phosphate + H(+) = (1S,2R)-1-C-(indol-3-yl)glycerol 3-phosphate + CO2 + H2O. It participates in amino-acid biosynthesis; L-tryptophan biosynthesis; L-tryptophan from chorismate: step 4/5. The polypeptide is Indole-3-glycerol phosphate synthase (Burkholderia pseudomallei (strain 1710b)).